Reading from the N-terminus, the 265-residue chain is 4-hydroxy-tetrahydrodipicolinate reductase (265 aa).

9–14 (GPRGRM) serves as a coordination point for NAD(+). Position 37 (Lys37) interacts with NADP(+). NAD(+) is bound by residues 99–101 (GTT) and 125–128 (APNF). His155 functions as the Proton donor/acceptor in the catalytic mechanism. His156 provides a ligand contact to (S)-2,3,4,5-tetrahydrodipicolinate. The Proton donor role is filled by Lys159. (S)-2,3,4,5-tetrahydrodipicolinate is bound at residue 165 to 166 (GT). The span at 178-190 (RESQKQGHPKEEE) shows a compositional bias: basic and acidic residues. The interval 178-200 (RESQKQGHPKEEETLPGARGADM) is disordered.

It belongs to the DapB family.

It localises to the cytoplasm. It carries out the reaction (S)-2,3,4,5-tetrahydrodipicolinate + NAD(+) + H2O = (2S,4S)-4-hydroxy-2,3,4,5-tetrahydrodipicolinate + NADH + H(+). The catalysed reaction is (S)-2,3,4,5-tetrahydrodipicolinate + NADP(+) + H2O = (2S,4S)-4-hydroxy-2,3,4,5-tetrahydrodipicolinate + NADPH + H(+). It participates in amino-acid biosynthesis; L-lysine biosynthesis via DAP pathway; (S)-tetrahydrodipicolinate from L-aspartate: step 4/4. Its function is as follows. Catalyzes the conversion of 4-hydroxy-tetrahydrodipicolinate (HTPA) to tetrahydrodipicolinate. The chain is 4-hydroxy-tetrahydrodipicolinate reductase from Oceanobacillus iheyensis (strain DSM 14371 / CIP 107618 / JCM 11309 / KCTC 3954 / HTE831).